Reading from the N-terminus, the 461-residue chain is CBL-interacting protein kinase 1 (461 aa).

The 256-residue stretch at Tyr19 to Phe274 folds into the Protein kinase domain. Residues Leu25–Val33 and Lys48 contribute to the ATP site. Catalysis depends on Asp142, which acts as the Proton acceptor. The interval Asp160–Glu189 is activation loop. Residues Glu308–Glu332 form the NAF domain. The PPI stretch occupies residues Gln338–Val367.

This sequence belongs to the protein kinase superfamily. CAMK Ser/Thr protein kinase family. SNF1 subfamily. The cofactor is Mn(2+).

The catalysed reaction is L-seryl-[protein] + ATP = O-phospho-L-seryl-[protein] + ADP + H(+). It carries out the reaction L-threonyl-[protein] + ATP = O-phospho-L-threonyl-[protein] + ADP + H(+). Functionally, CIPK serine-threonine protein kinases interact with CBL proteins. Binding of a CBL protein to the regulatory NAF domain of CIPK protein lead to the activation of the kinase in a calcium-dependent manner. In Oryza sativa subsp. japonica (Rice), this protein is CBL-interacting protein kinase 1 (CIPK1).